The sequence spans 249 residues: Triosephosphate isomerase (249 aa).

Substrate-binding residues include N12 and K14. K14 carries the post-translational modification N6-acetyllysine. The residue at position 16 (N16) is a Deamidated asparagine. At Y68 the chain carries 3'-nitrotyrosine. Position 72 is a deamidated asparagine (N72). The residue at position 80 (S80) is a Phosphoserine. The active-site Electrophile is H96. The residue at position 106 (S106) is a Phosphoserine. A Glycyl lysine isopeptide (Lys-Gly) (interchain with G-Cter in SUMO1) cross-link involves residue K142. Position 149 is an N6-succinyllysine (K149). Residue K156 is modified to N6-acetyllysine; alternate. K156 bears the N6-succinyllysine; alternate mark. Residue S159 is modified to Phosphoserine. The Proton acceptor role is filled by E166. T173 carries the post-translational modification Phosphothreonine. K194 carries the N6-acetyllysine; alternate modification. K194 carries the N6-succinyllysine; alternate modification. K194 is modified (N6-methyllysine; alternate). The residue at position 198 (S198) is a Phosphoserine. Y209 carries the 3'-nitrotyrosine modification. S212 is subject to Phosphoserine. T214 carries the phosphothreonine modification. S223 is modified (phosphoserine). K238 is modified (N6-acetyllysine).

This sequence belongs to the triosephosphate isomerase family. As to quaternary structure, homodimer. Asn-16 and Asn-72 undergo deamidation which gives rise to four extra negative charges. These are expected to decrease subunit-subunit interactions and so expose the hydrophobic interface to the aqueous environment.

The protein resides in the cytoplasm. The enzyme catalyses D-glyceraldehyde 3-phosphate = dihydroxyacetone phosphate. It carries out the reaction dihydroxyacetone phosphate = methylglyoxal + phosphate. It participates in carbohydrate degradation; glycolysis; D-glyceraldehyde 3-phosphate from glycerone phosphate: step 1/1. Its pathway is carbohydrate biosynthesis; gluconeogenesis. Triosephosphate isomerase is an extremely efficient metabolic enzyme that catalyzes the interconversion between dihydroxyacetone phosphate (DHAP) and D-glyceraldehyde-3-phosphate (G3P) in glycolysis and gluconeogenesis. Functionally, it is also responsible for the non-negligible production of methylglyoxal a reactive cytotoxic side-product that modifies and can alter proteins, DNA and lipids. The chain is Triosephosphate isomerase (TPI1) from Oryctolagus cuniculus (Rabbit).